The primary structure comprises 868 residues: Protein NIP100 (868 aa).

In terms of domain architecture, CAP-Gly spans glycine 34–lysine 84. Coiled-coil stretches lie at residues leucine 101 to asparagine 175, leucine 207 to leucine 375, and serine 645 to glutamate 776.

As to quaternary structure, component of the dynactin complex composed of at least ARP1, JNM1, NIP100 and ARP10. Dynactin comprises a short rod of the ARP1 filament attached to ARP10 at its pointed-end and probably associated with the capping protein at its barbed-end. The rod is implicated in dynein cargo binding. A sidearm formed by NIP100 projects from the ARP1 filament and is implicated in motor binding.

The protein localises to the cytoplasm. Its subcellular location is the cytoskeleton. The protein resides in the spindle pole. In terms of biological role, motor-binding component of the dynactin complex which assists cytoplasmic dynein by increasing its processivity and by regulation of its cargo binding. The dynactin complex is required for the spindle translocation late in anaphase and is involved in a cell wall synthesis checkpoint. This Saccharomyces cerevisiae (strain ATCC 204508 / S288c) (Baker's yeast) protein is Protein NIP100 (NIP100).